The chain runs to 315 residues: Serpentine receptor class delta-31 (315 aa).

7 helical membrane passes run 6 to 26 (LHSI…YLAI), 38 to 58 (AIIT…FFVM), 83 to 103 (ACYV…IWMI), 124 to 144 (VFVA…WFSI), 174 to 194 (ITLI…YIWI), 225 to 245 (FQVF…SMFT), and 256 to 276 (AISV…ILFV).

Belongs to the nematode receptor-like protein srd family.

The protein localises to the membrane. The polypeptide is Serpentine receptor class delta-31 (srd-31) (Caenorhabditis elegans).